A 340-amino-acid polypeptide reads, in one-letter code: DNA-directed RNA polymerase subunit alpha (340 aa).

Residues 1–238 (MVDPIVTKNW…EQLSIFINFD (238 aa)) are alpha N-terminal domain (alpha-NTD). The tract at residues 255-340 (LNENLFRSVD…AAPQGGAPKV (86 aa)) is alpha C-terminal domain (alpha-CTD).

It belongs to the RNA polymerase alpha chain family. As to quaternary structure, homodimer. The RNAP catalytic core consists of 2 alpha, 1 beta, 1 beta' and 1 omega subunit. When a sigma factor is associated with the core the holoenzyme is formed, which can initiate transcription.

It catalyses the reaction RNA(n) + a ribonucleoside 5'-triphosphate = RNA(n+1) + diphosphate. DNA-dependent RNA polymerase catalyzes the transcription of DNA into RNA using the four ribonucleoside triphosphates as substrates. The sequence is that of DNA-directed RNA polymerase subunit alpha from Anaeromyxobacter dehalogenans (strain 2CP-1 / ATCC BAA-258).